A 145-amino-acid polypeptide reads, in one-letter code: Peptide methionine sulfoxide reductase MsrB (145 aa).

The region spanning 4-127 (KEELRQRIGD…NSAALKFIPY (124 aa)) is the MsrB domain. The active-site Nucleophile is the Cys116.

This sequence belongs to the MsrB Met sulfoxide reductase family.

It carries out the reaction L-methionyl-[protein] + [thioredoxin]-disulfide + H2O = L-methionyl-(R)-S-oxide-[protein] + [thioredoxin]-dithiol. The polypeptide is Peptide methionine sulfoxide reductase MsrB (Streptococcus equi subsp. zooepidemicus (strain H70)).